We begin with the raw amino-acid sequence, 865 residues long: Leucine--tRNA ligase (865 aa).

A 'HIGH' region motif is present at residues 41–51; the sequence is PYPSGRIHMGH. Residues 614–618 carry the 'KMSKS' region motif; the sequence is KMSKS. Position 617 (lysine 617) interacts with ATP.

The protein belongs to the class-I aminoacyl-tRNA synthetase family.

It is found in the cytoplasm. The catalysed reaction is tRNA(Leu) + L-leucine + ATP = L-leucyl-tRNA(Leu) + AMP + diphosphate. This chain is Leucine--tRNA ligase, found in Rhodospirillum centenum (strain ATCC 51521 / SW).